We begin with the raw amino-acid sequence, 504 residues long: Multidrug efflux pump LfrA (504 aa).

Transmembrane regions (helical) follow at residues 19–39 (WVALAVLALPVLLIAIDNTVL), 58–78 (LWIVDVYSLVLAALLVAMGSL), 87–107 (LLLIGGAGFAVVSALAAFAPS), 110–130 (LLVGARALLGVFGAMLMPSTL), 145–165 (LAIAIWASCFTAGSALGPIVG), 172–192 (FHWGAVFLVAVPILLPLLVLG), 206–226 (PFDPVSIVLSFTTMLPIVWAV), 233–253 (GLSAAAAAAFAVGIVSGALFV), 275–295 (TSSILANFLSIIGLIGFIFFI), 309–329 (TAGLVTLPGAVVSMIAGLAVV), 338–358 (DTLMVTGLVFVAVGFLMILLF), 361–381 (NLTVAAIIASFVVLELGVGVS), 408–428 (AYELGAVVGTATLGTIFTAFY), and 480–500 (IAPTAVIAAMLVLAAAAVVGV).

This sequence belongs to the major facilitator superfamily.

The protein localises to the cell inner membrane. With respect to regulation, inhibited by the protonophore carbonyl cyanide m-chorophenylhydrazone (CCCP). Ethidium bromide efflux is inhibited by chlorpromazine, thioridazine and verapamil. Energy-dependent efflux pump that contributes to drug resistance. Catalyzes the efflux of norfloxacin and several related fluoroquinolones (FQ). Contributes significantly to the intrinsic MICs for ethidium bromide and acriflavine. Overexpression confers low-level resistance to hydrophilic FQ such as ciprofloxacin, ofloxacin and levofloxacin, and to ethidium bromide, acridine, acriflavine, rhodamine 123 and some quaternary ammonium compounds. May contribute to resistance to certain beta-lactams. Probably uses the proton motive force to export drugs. In Mycolicibacterium smegmatis (strain ATCC 700084 / mc(2)155) (Mycobacterium smegmatis), this protein is Multidrug efflux pump LfrA.